The primary structure comprises 286 residues: Pantothenate synthetase (286 aa).

30–37 (MGNLHEGH) is an ATP binding site. His-37 functions as the Proton donor in the catalytic mechanism. Gln-61 serves as a coordination point for (R)-pantoate. Residue Gln-61 participates in beta-alanine binding. 149–152 (GRKD) provides a ligand contact to ATP. Gln-155 lines the (R)-pantoate pocket. Residues Val-178 and 186–189 (MSSR) contribute to the ATP site.

Belongs to the pantothenate synthetase family. As to quaternary structure, homodimer.

Its subcellular location is the cytoplasm. The enzyme catalyses (R)-pantoate + beta-alanine + ATP = (R)-pantothenate + AMP + diphosphate + H(+). It functions in the pathway cofactor biosynthesis; (R)-pantothenate biosynthesis; (R)-pantothenate from (R)-pantoate and beta-alanine: step 1/1. Its function is as follows. Catalyzes the condensation of pantoate with beta-alanine in an ATP-dependent reaction via a pantoyl-adenylate intermediate. In Alkalilimnicola ehrlichii (strain ATCC BAA-1101 / DSM 17681 / MLHE-1), this protein is Pantothenate synthetase.